The following is a 439-amino-acid chain: GTPase Obg (439 aa).

Positions Met-1–Leu-159 constitute an Obg domain. An OBG-type G domain is found at Ala-160 to Ala-336. Residues Gly-166–Ser-173, Phe-191–Ser-195, Asp-213–Gly-216, Thr-283–Asp-286, and Ser-317–Ile-319 each bind GTP. Mg(2+) is bound by residues Ser-173 and Thr-193. Residues Ala-338 to Tyr-357 form a disordered region. The span at Tyr-344–Glu-354 shows a compositional bias: basic and acidic residues. An OCT domain is found at Thr-358–Glu-439.

The protein belongs to the TRAFAC class OBG-HflX-like GTPase superfamily. OBG GTPase family. Monomer. Requires Mg(2+) as cofactor.

Its subcellular location is the cytoplasm. An essential GTPase which binds GTP, GDP and possibly (p)ppGpp with moderate affinity, with high nucleotide exchange rates and a fairly low GTP hydrolysis rate. Plays a role in control of the cell cycle, stress response, ribosome biogenesis and in those bacteria that undergo differentiation, in morphogenesis control. The chain is GTPase Obg from Leuconostoc mesenteroides subsp. mesenteroides (strain ATCC 8293 / DSM 20343 / BCRC 11652 / CCM 1803 / JCM 6124 / NCDO 523 / NBRC 100496 / NCIMB 8023 / NCTC 12954 / NRRL B-1118 / 37Y).